The sequence spans 274 residues: MQFSKMHGLGNDFVVVDAITQNLYFSPETIKRLADRHRGIGFDQMLIVEPPYDPDLDFHYRIFNADGSEVSQCGNGARCFARFVTLKGLTDKKDIAVSTQTGKMILSIKDDGMIRINMGEPIWEPAKIPFTANKFEKNYILRTSIQTVLCGAVSMGNPHCVVQVDDIQTANVEQLGPLLENHERFPERVNAGFMQVIHRGHIKLRVYERGAGETQACGSGACAAVAVGVMQGLLDSKVQVDLPGGSLIIEWEGVGKPLFMTGDATHVYDGVIRL.

Residues asparagine 11, glutamine 44, and asparagine 64 each coordinate substrate. The active-site Proton donor is cysteine 73. Substrate contacts are provided by residues 74-75 (GN), asparagine 157, asparagine 190, and 208-209 (ER). Cysteine 217 functions as the Proton acceptor in the catalytic mechanism. Residue 218 to 219 (GS) coordinates substrate.

The protein belongs to the diaminopimelate epimerase family. Homodimer.

The protein resides in the cytoplasm. It catalyses the reaction (2S,6S)-2,6-diaminopimelate = meso-2,6-diaminopimelate. It functions in the pathway amino-acid biosynthesis; L-lysine biosynthesis via DAP pathway; DL-2,6-diaminopimelate from LL-2,6-diaminopimelate: step 1/1. Catalyzes the stereoinversion of LL-2,6-diaminopimelate (L,L-DAP) to meso-diaminopimelate (meso-DAP), a precursor of L-lysine and an essential component of the bacterial peptidoglycan. The protein is Diaminopimelate epimerase of Pasteurella multocida (strain Pm70).